A 1119-amino-acid chain; its full sequence is DNA-directed RNA polymerase subunit beta (1119 aa).

Belongs to the RNA polymerase beta chain family. In terms of assembly, the RNAP catalytic core consists of 2 alpha, 1 beta, 1 beta' and 1 omega subunit. When a sigma factor is associated with the core the holoenzyme is formed, which can initiate transcription.

The catalysed reaction is RNA(n) + a ribonucleoside 5'-triphosphate = RNA(n+1) + diphosphate. Its function is as follows. DNA-dependent RNA polymerase catalyzes the transcription of DNA into RNA using the four ribonucleoside triphosphates as substrates. In Thermus aquaticus, this protein is DNA-directed RNA polymerase subunit beta.